A 303-amino-acid polypeptide reads, in one-letter code: MISASALNSELINKIAQDFAQATGLAVVVVNIHGDEISELFNFTPFCQLMRQHPQHSTRCRMSDRCGGLEASKSDQPCIYRCHAGLTDFSIPLVIAGHLVGFVLCGQVRLSNDVELVNILNVDDRWQADPELLNEFRNVPEMDYSRVIASADLLKLIVENCLKKQLNFVVIKDNPQQSEANKTTRGPTPHDSKMKKALRYIDAHLSDDLRLEDVASHVYLSPYYFSKLFKKYQGIGFNAWVNRQRMVSARELLCHSDWSIASIARNLGFSQTSYFCKVFRQTYQVTPQAYRQQINENSHPPSL.

The HTH araC/xylS-type domain occupies 195 to 293; sequence KKALRYIDAH…QVTPQAYRQQ (99 aa). 2 consecutive DNA-binding regions (H-T-H motif) follow at residues 212–233 and 260–283; these read EDVASHVYLSPYYFSKLFKKYQ and IASIARNLGFSQTSYFCKVFRQTY.

The protein operates within cofactor biosynthesis; adenosylcobalamin biosynthesis [regulation]. It participates in polyol metabolism; 1,2-propanediol degradation [regulation]. Functionally, positive regulatory protein of pdu and cob operons. Positively autoregulates its own expression. The sequence is that of Regulatory protein PocR (pocR) from Salmonella typhimurium (strain LT2 / SGSC1412 / ATCC 700720).